Here is a 412-residue protein sequence, read N- to C-terminus: Gamma-glutamyl phosphate reductase (412 aa).

It belongs to the gamma-glutamyl phosphate reductase family.

The protein resides in the cytoplasm. The catalysed reaction is L-glutamate 5-semialdehyde + phosphate + NADP(+) = L-glutamyl 5-phosphate + NADPH + H(+). Its pathway is amino-acid biosynthesis; L-proline biosynthesis; L-glutamate 5-semialdehyde from L-glutamate: step 2/2. Functionally, catalyzes the NADPH-dependent reduction of L-glutamate 5-phosphate into L-glutamate 5-semialdehyde and phosphate. The product spontaneously undergoes cyclization to form 1-pyrroline-5-carboxylate. This is Gamma-glutamyl phosphate reductase from Bartonella quintana (strain Toulouse) (Rochalimaea quintana).